Here is a 444-residue protein sequence, read N- to C-terminus: tRNA-2-methylthio-N(6)-dimethylallyladenosine synthase (444 aa).

Residues 2-119 (KKLYIRTFGC…LPSMLNEVLT (118 aa)) form the MTTase N-terminal domain. 6 residues coordinate [4Fe-4S] cluster: Cys-11, Cys-48, Cys-82, Cys-161, Cys-165, and Cys-168. Residues 147-379 (KTSSVTAFVS…QKTIDKNTER (233 aa)) enclose the Radical SAM core domain. The region spanning 382–444 (KSMVGSVQKI…GNSLVGNLIA (63 aa)) is the TRAM domain.

This sequence belongs to the methylthiotransferase family. MiaB subfamily. As to quaternary structure, monomer. Requires [4Fe-4S] cluster as cofactor.

The protein localises to the cytoplasm. The enzyme catalyses N(6)-dimethylallyladenosine(37) in tRNA + (sulfur carrier)-SH + AH2 + 2 S-adenosyl-L-methionine = 2-methylsulfanyl-N(6)-dimethylallyladenosine(37) in tRNA + (sulfur carrier)-H + 5'-deoxyadenosine + L-methionine + A + S-adenosyl-L-homocysteine + 2 H(+). Catalyzes the methylthiolation of N6-(dimethylallyl)adenosine (i(6)A), leading to the formation of 2-methylthio-N6-(dimethylallyl)adenosine (ms(2)i(6)A) at position 37 in tRNAs that read codons beginning with uridine. This chain is tRNA-2-methylthio-N(6)-dimethylallyladenosine synthase, found in Ruthia magnifica subsp. Calyptogena magnifica.